A 522-amino-acid polypeptide reads, in one-letter code: Zinc finger protein 329 (522 aa).

Ser30 carries the phosphoserine modification. 12 consecutive C2H2-type zinc fingers follow at residues Tyr184–His206, Tyr212–His234, Tyr240–His262, Tyr268–His290, Tyr296–His318, Tyr324–His346, Phe352–His374, Tyr380–His402, Tyr408–His430, Tyr436–His458, Tyr464–His486, and Ser492–His514.

This sequence belongs to the krueppel C2H2-type zinc-finger protein family.

It localises to the nucleus. Functionally, may be involved in transcriptional regulation. This Mus musculus (Mouse) protein is Zinc finger protein 329 (Znf329).